The chain runs to 601 residues: MQYSRMTATRENPKYKNLRVEECDVLIIGSGPVGATYAREILDPGSGASPGRKAPKVIMVETGAQESKVPGEHKKNAVVYQKHIDSFVNVIQGSLFATSVPTRVDPNLKLPPVSWSPREKQNFNGQNKEQNIYHNLDANGVSRNVGGMSTHWTCATPRQHELERSKIFDDATWDRLYKRAEELIGTRTDVLDQSIRQRLVLDILRKKFKNRDAKALPLAAEKVEGKNLIKWSSSSTVLGNLLEDEKFTLLDQHHCEKLEFNDETNKVSFAIIKNLAKPQTSKEDEDRLRIKAKYVIVCGGPILTPQLLFKSGFRYDEEDAEDSEGNKSSLYIPALGRNLTEQTMCFCQIVLKDKWVEELQKNNWGPECEEHRRKYDEEDDPLRIPFDDLDPQVTLPFTENTPWHTQIHRDAFSYGAVPPAIDKRTIVDLRYFGRAETQWRNRVTFSKKLTDAYGMPQPTFDFKLSTKDRLESHRMMQDMEKVAGELGGYLPGSEPQFLAPGLALHVCGTTAALRKGCRSEDEMKRISVCDENSKVWGVENLHLGGLNVIPGPRSNASNPTLTAMCFAIKGAEEIRRKLGKKGSHSGNRDDGDVDTDTDDDA.

H151 is modified (tele-8alpha-FAD histidine). Substrate contacts are provided by Q406 and H408. H505 functions as the Proton acceptor in the catalytic mechanism. N558 is a catalytic residue. Residues 577–601 (KLGKKGSHSGNRDDGDVDTDTDDDA) are disordered. Residues 591-601 (GDVDTDTDDDA) show a composition bias toward acidic residues.

This sequence belongs to the GMC oxidoreductase family. In terms of assembly, homotetramer. Requires FAD as cofactor.

The catalysed reaction is D-glucose + O2 = 2-dehydro-D-glucose + H2O2. Catalyzes the oxidation of various aldopyranoses and disaccharides on carbon-2 to the corresponding 2-keto sugars concomitant with the reduction of O(2) to H(2)O(2). The sequence is that of Pyranose 2-oxidase (p2ox) from Emericella nidulans (strain FGSC A4 / ATCC 38163 / CBS 112.46 / NRRL 194 / M139) (Aspergillus nidulans).